We begin with the raw amino-acid sequence, 140 residues long: Large ribosomal subunit protein uL11 (140 aa).

It belongs to the universal ribosomal protein uL11 family. As to quaternary structure, part of the ribosomal stalk of the 50S ribosomal subunit. Interacts with L10 and the large rRNA to form the base of the stalk. L10 forms an elongated spine to which L12 dimers bind in a sequential fashion forming a multimeric L10(L12)X complex. One or more lysine residues are methylated.

In terms of biological role, forms part of the ribosomal stalk which helps the ribosome interact with GTP-bound translation factors. The polypeptide is Large ribosomal subunit protein uL11 (Oleidesulfovibrio alaskensis (strain ATCC BAA-1058 / DSM 17464 / G20) (Desulfovibrio alaskensis)).